A 266-amino-acid polypeptide reads, in one-letter code: MWYSTVSNPRIALIKQGYHILAEYNLVKEELKNIYAIPSYACALHWFGVIFVHSGIYAGSVFRFSILLPDNFPEDASLLTVVFSTVILHPHICPQNRTLDLGHFLKEWRKDQHHIWHVLRYIQAIFADPEGSICTGQAASGDLVVMDEVSNMEALNMLAKSRPEYIKRVQEQAIASRNHIYDRPLTDDPHYIIVEPYCAERHLKFVDQLKSPCWKEATSMDCSQPSEYLGHIDSSRQLDEEEANQLEKLHRTRIVESHRDEAVDSV.

The UBC core domain maps to 15–178 (KQGYHILAEY…VQEQAIASRN (164 aa)).

The protein belongs to the ubiquitin-conjugating enzyme family. FTS subfamily.

The protein is Protein crossbronx-like of Drosophila yakuba (Fruit fly).